Here is a 73-residue protein sequence, read N- to C-terminus: MKFHIIFCLLAALMMTSAFAEVTVEPLRHSNKNPTESECKNACADAYAKGDQSRIPEAHNFRDYYCNCHITVQ.

The signal sequence occupies residues 1 to 20 (MKFHIIFCLLAALMMTSAFA).

The protein belongs to the scoloptoxin-15 family. In terms of processing, contains 2 disulfide bonds. Expressed by the venom gland.

Its subcellular location is the secreted. The sequence is that of U-scoloptoxin(15)-Sa1a from Scolopendra alternans (Florida Keys giant centipede).